Reading from the N-terminus, the 322-residue chain is Tropinone reductase homolog At2g29260, chloroplastic (322 aa).

The N-terminal 61 residues, 1–61, are a transit peptide targeting the chloroplast; that stretch reads MVLDMASHLY…YASQSSIAIT (61 aa). Residue 74–98 participates in NADP(+) binding; the sequence is LVTGGTRGIGRAIVEELAGLGAEVH. A substrate-binding site is contributed by S207.

Belongs to the short-chain dehydrogenases/reductases (SDR) family. SDR65C subfamily.

It is found in the plastid. The protein localises to the chloroplast. In Arabidopsis thaliana (Mouse-ear cress), this protein is Tropinone reductase homolog At2g29260, chloroplastic.